Here is a 497-residue protein sequence, read N- to C-terminus: MHSKPSRLPFSLALRLTFFISLSTILAFIAFTWFMLHSVEKHFAEQDVSDLQQISTTLSRILQSPADPDEKKVSKIKESIASYRNVALLLLNPRGEVLYSSAQGAALRPAVNSADFSEHSRARDVFLWTVEDTARAMDTGSGMKMETYRIIASSGQATFQGKQQNYVMLTGLSINFHLHYLDALKKNLIAIAVVISLLIVLIIRIAVRQGHLPLRNVSNAIKNITSENLDARLEPTRVPIELEQLVISFNHMIGKIEDVFTRQANFSADIAHEIRTPITNLVTQTEIALSQDRTQKELEDVLYSSLEEYNRMTKMVSDMLFLAQADNNQLIPDRVRFDLQSQNSLKVFRVFSEALGPKETPILLLKFNGMPCLVEGDPQMFRRAINNLLSNALRYTPEGQAITVSIREQESFFDLVIENPGKPIPEEHLSRLFDRFYRVDPSRQRKGEGSGIGLAIVKSIVEAHHGRVQVESDVHSTRFILSVPRLEKMIPDTQCWE.

At 1–15 the chain is on the cytoplasmic side; the sequence is MHSKPSRLPFSLALR. Residues 16-36 traverse the membrane as a helical segment; the sequence is LTFFISLSTILAFIAFTWFML. Residues 37 to 186 are Periplasmic-facing; the sequence is HSVEKHFAEQ…HLHYLDALKK (150 aa). A helical membrane pass occupies residues 187-207; that stretch reads NLIAIAVVISLLIVLIIRIAV. The 54-residue stretch at 208–261 folds into the HAMP domain; sequence RQGHLPLRNVSNAIKNITSENLDARLEPTRVPIELEQLVISFNHMIGKIEDVFT. The Cytoplasmic portion of the chain corresponds to 208–497; that stretch reads RQGHLPLRNV…KMIPDTQCWE (290 aa). The region spanning 269-487 is the Histidine kinase domain; sequence DIAHEIRTPI…RFILSVPRLE (219 aa). Phosphohistidine; by autocatalysis is present on histidine 272.

It localises to the cell inner membrane. The catalysed reaction is ATP + protein L-histidine = ADP + protein N-phospho-L-histidine.. Its function is as follows. Component of the sil cation-efflux system that confers resistance to silver. Probable member of a two-component regulatory system SilS/SilR. May activate SilR by phosphorylation. This is Probable sensor kinase SilS (silS) from Salmonella typhimurium.